Here is a 462-residue protein sequence, read N- to C-terminus: Indoleacetamide hydrolase (462 aa).

Catalysis depends on charge relay system residues Lys-74 and Ser-149. The Acyl-ester intermediate role is filled by Ser-173.

Belongs to the amidase family.

It functions in the pathway plant hormone metabolism; auxin biosynthesis. In terms of biological role, hydrolyzes indole-3-acetamide (IAM) into indole-3-acetic acid (IAA). This Allorhizobium ampelinum (strain ATCC BAA-846 / DSM 112012 / S4) (Agrobacterium vitis (strain S4)) protein is Indoleacetamide hydrolase (iaaH).